Consider the following 393-residue polypeptide: NAD(P)H-quinone oxidoreductase subunit H, chloroplastic (393 aa).

This sequence belongs to the complex I 49 kDa subunit family. In terms of assembly, NDH is composed of at least 16 different subunits, 5 of which are encoded in the nucleus.

The protein resides in the plastid. It is found in the chloroplast thylakoid membrane. The catalysed reaction is a plastoquinone + NADH + (n+1) H(+)(in) = a plastoquinol + NAD(+) + n H(+)(out). It catalyses the reaction a plastoquinone + NADPH + (n+1) H(+)(in) = a plastoquinol + NADP(+) + n H(+)(out). NDH shuttles electrons from NAD(P)H:plastoquinone, via FMN and iron-sulfur (Fe-S) centers, to quinones in the photosynthetic chain and possibly in a chloroplast respiratory chain. The immediate electron acceptor for the enzyme in this species is believed to be plastoquinone. Couples the redox reaction to proton translocation, and thus conserves the redox energy in a proton gradient. The sequence is that of NAD(P)H-quinone oxidoreductase subunit H, chloroplastic from Panax ginseng (Korean ginseng).